The chain runs to 187 residues: Macro domain-containing protein MM_0177 (187 aa).

Positions 8 to 187 constitute a Macro domain; it reads VEEGIRMELN…SIKKALSKIL (180 aa).

It belongs to the MacroD-type family.

This chain is Macro domain-containing protein MM_0177, found in Methanosarcina mazei (strain ATCC BAA-159 / DSM 3647 / Goe1 / Go1 / JCM 11833 / OCM 88) (Methanosarcina frisia).